Here is a 507-residue protein sequence, read N- to C-terminus: Cytochrome P450 monooxygenase helB3 (507 aa).

Positions 1 to 25 (MAVATLISILFAVLALRLCYLLIHA) are cleaved as a signal peptide. N-linked (GlcNAc...) asparagine glycans are attached at residues N111, N206, and N339. Position 435 (C435) interacts with heme.

The protein belongs to the cytochrome P450 family. It depends on heme as a cofactor.

It functions in the pathway mycotoxin biosynthesis. Functionally, cytochrome P450 monooxygenase; part of the gene cluster that mediates the biosynthesis of helvolic acid, an antibacterial nortriterpenoid. Protostadienol synthase helA cyclizes (3S)-oxidosqualene to (17Z)-protosta-17(20),24-dien-3-beta-ol (protostadienol). The synthesis of protostadienol is followed by several steps of monooxygenation, dehydrogenation, and acyl transfer to yield the final helvolic acid. Following the cyclization to the tetracyclic protostadienol by helA, cytochrome P450 monooxygenases helB1-mediated and helB2-mediated oxidation at C-4 and C-16, acyltransferase helD2-dependent acetylation of 16-OH, oxidation of C-21 by cytochrome P450 monooxygenase helB4, and short chain dehydrogenase helC-dependent oxidative decarboxylation yield the fusidane skeleton. This intermediate is further modified in three additional steps mediated by the cytochrome P450 monooxygenase helB3, the acyltransferase helD1, and the 3-ketosteroid 1-dehydrogenase helE to give helvolic acid. Compared with the late stages in the biosynthesis of helvolic acid, enzymes involved in the early stage modifications act in a relatively strict order. The hydroxylation of C-16 by helB1 and subsequent acetylation by helD2 should occur before the helB3-mediated oxidation of C-21. C-4 demethylation in fusidane-type antibiotics proceeds in an unusual manner though it is also achieved by oxidative decarboxylation. The methyl group at C-4 beta position is oxidized by helB1 and subsequently removed by the short chain dehydrogenase helC. This chain is Cytochrome P450 monooxygenase helB3, found in Aspergillus fumigatus (strain ATCC MYA-4609 / CBS 101355 / FGSC A1100 / Af293) (Neosartorya fumigata).